The sequence spans 146 residues: Large ribosomal subunit protein uL15 (146 aa).

The disordered stretch occupies residues 1–45; the sequence is MTIKLHHLRPAPGSKTERTRVGRGEGSKGKTAGRGTKGTKARKNV. The span at 15-28 shows a compositional bias: basic and acidic residues; sequence KTERTRVGRGEGSK.

Belongs to the universal ribosomal protein uL15 family. As to quaternary structure, part of the 50S ribosomal subunit.

Its function is as follows. Binds to the 23S rRNA. This Mycobacteroides abscessus (strain ATCC 19977 / DSM 44196 / CCUG 20993 / CIP 104536 / JCM 13569 / NCTC 13031 / TMC 1543 / L948) (Mycobacterium abscessus) protein is Large ribosomal subunit protein uL15.